Here is a 165-residue protein sequence, read N- to C-terminus: Nucleotide-binding protein CHY_1197 (165 aa).

This sequence belongs to the YajQ family.

In terms of biological role, nucleotide-binding protein. This is Nucleotide-binding protein CHY_1197 from Carboxydothermus hydrogenoformans (strain ATCC BAA-161 / DSM 6008 / Z-2901).